Here is a 333-residue protein sequence, read N- to C-terminus: MQTEPYIQPMQSPDFKPILCIVGPTGAGKTHLAMSLAEHAQSIGLTVELISMDSALVYRGLNIGSAKPSKEEQATVIHHLIDILEPTEVYSAARFAKDAKQLCEDIRSRGNIPVVVGGTMLYWRAWAHGLSSLPPANTDIRARLDEEGKSLGWPAMHTKLAQIDPETAARLKPNDSQRVQRALEVFEITGKPMSALLAESPSEDGREGSVIPPWINLVSLEPSDRKRLHLNLEKRFDEMLVGGLLEEVKTLKANVALHADLPAIRSVGYRQVWEYLDGQTDWEEMRYKSLAATRQLGKRQLTWLRAMTGRNTFDPFNPNELKAALDFCKRNLV.

23-30 (GPTGAGKT) serves as a coordination point for ATP. A substrate-binding site is contributed by 25 to 30 (TGAGKT). 2 interaction with substrate tRNA regions span residues 53–56 (DSAL) and 177–181 (QRVQR).

The protein belongs to the IPP transferase family. In terms of assembly, monomer. Mg(2+) serves as cofactor.

It catalyses the reaction adenosine(37) in tRNA + dimethylallyl diphosphate = N(6)-dimethylallyladenosine(37) in tRNA + diphosphate. Functionally, catalyzes the transfer of a dimethylallyl group onto the adenine at position 37 in tRNAs that read codons beginning with uridine, leading to the formation of N6-(dimethylallyl)adenosine (i(6)A). The polypeptide is tRNA dimethylallyltransferase (Polynucleobacter asymbioticus (strain DSM 18221 / CIP 109841 / QLW-P1DMWA-1) (Polynucleobacter necessarius subsp. asymbioticus)).